A 147-amino-acid polypeptide reads, in one-letter code: Heavy metal-dependent transcription regulator 2 (147 aa).

The HTH merR-type domain maps to 1–69; sequence MNIGEASKTS…VEQIKELLAL (69 aa). A DNA-binding region (H-T-H motif) is located at residues 3–22; sequence IGEASKTSGVSSKMIRYYEQ.

It localises to the cytoplasm. Its function is as follows. Transcriptional regulator involved in acid tolerance. Binds copper. The chain is Heavy metal-dependent transcription regulator 2 (hmrR2) from Rhizobium meliloti (strain 1021) (Ensifer meliloti).